Reading from the N-terminus, the 490-residue chain is Scarecrow-like transcription factor PAT1 (490 aa).

The GRAS domain maps to 110–490 (TLEAISRRDL…RDLVASCAWK (381 aa)). The tract at residues 117 to 178 (RDLRADLVSC…AQLASSGSSI (62 aa)) is leucine repeat I (LRI). A VHIID region spans residues 197–262 (MHILYEVCPY…GGPPRIRITG (66 aa)). Residues 228–232 (VHIID) carry the VHIID motif. A leucine repeat II (LRII) region spans residues 278–310 (IVGNRLAKLAKQFNVPFEFNSVSVSVSEVKPKN). Positions 319–413 (LAVNFAFVLH…QHCLARDVVN (95 aa)) are PFYRE. Residues 416 to 490 (ACEGADRVER…RDLVASCAWK (75 aa)) form an SAW region.

It belongs to the GRAS family.

The protein localises to the cytoplasm. Functionally, probable transcription factor involved in phytochrome A (phyA) signal transduction. The polypeptide is Scarecrow-like transcription factor PAT1 (PAT1) (Arabidopsis thaliana (Mouse-ear cress)).